Consider the following 407-residue polypeptide: Steroid 3-ketoacyl-CoA thiolase FadA6 (407 aa).

Cys110 functions as the Acyl-thioester intermediate in the catalytic mechanism. CoA contacts are provided by residues Gln178, 237 to 239 (RES), and Ser262. Residues His363 and Cys393 each act as proton acceptor in the active site. Gly395 contacts substrate.

The protein belongs to the thiolase-like superfamily. Thiolase family.

The enzyme catalyses an acyl-CoA + acetyl-CoA = a 3-oxoacyl-CoA + CoA. It carries out the reaction 6-methyl-3,7-dioxodecanedioyl-CoA + CoA = 4-methyl-5-oxo-octanedioyl-CoA + acetyl-CoA. Its pathway is steroid metabolism; cholesterol degradation. Its function is as follows. May be involved in the final steps of cholesterol and steroid degradation. Catalyzes the formation of 4-methyl-5-oxo-octanedioyl-CoA (MOODA-CoA) and acetyl-CoA from 6-methyl-3,7-dioxodecanedioyl-CoA (MeDODA-CoA) and coenzyme A. In Mycobacterium tuberculosis (strain ATCC 25618 / H37Rv), this protein is Steroid 3-ketoacyl-CoA thiolase FadA6.